The sequence spans 54 residues: Photosystem II reaction center protein K (54 aa).

The propeptide occupies 1 to 17; the sequence is MLLEHVTITLLNNTSFA. A helical membrane pass occupies residues 29-49; it reads LIDVLPIIPLLFLLLAFVWQA.

This sequence belongs to the PsbK family. PSII is composed of 1 copy each of membrane proteins PsbA, PsbB, PsbC, PsbD, PsbE, PsbF, PsbH, PsbI, PsbJ, PsbK, PsbL, PsbM, PsbT, PsbY, PsbZ, Psb30/Ycf12, at least 3 peripheral proteins of the oxygen-evolving complex and a large number of cofactors. It forms dimeric complexes.

The protein resides in the plastid. The protein localises to the chloroplast thylakoid membrane. In terms of biological role, one of the components of the core complex of photosystem II (PSII). PSII is a light-driven water:plastoquinone oxidoreductase that uses light energy to abstract electrons from H(2)O, generating O(2) and a proton gradient subsequently used for ATP formation. It consists of a core antenna complex that captures photons, and an electron transfer chain that converts photonic excitation into a charge separation. This is Photosystem II reaction center protein K from Euglena mutabilis.